The following is a 310-amino-acid chain: Acetylglutamate kinase (310 aa).

Substrate is bound by residues 79 to 80, arginine 101, and asparagine 206; that span reads GG.

Belongs to the acetylglutamate kinase family. ArgB subfamily.

It is found in the cytoplasm. It carries out the reaction N-acetyl-L-glutamate + ATP = N-acetyl-L-glutamyl 5-phosphate + ADP. The protein operates within amino-acid biosynthesis; L-arginine biosynthesis; N(2)-acetyl-L-ornithine from L-glutamate: step 2/4. In terms of biological role, catalyzes the ATP-dependent phosphorylation of N-acetyl-L-glutamate. This chain is Acetylglutamate kinase, found in Rhodospirillum rubrum (strain ATCC 11170 / ATH 1.1.1 / DSM 467 / LMG 4362 / NCIMB 8255 / S1).